The chain runs to 236 residues: Phospholipid hydroperoxide glutathione peroxidase, chloroplastic (236 aa).

The N-terminal 64 residues, 1–64 (MASMAFSTTF…SNFPIVPSKT (64 aa)), are a transit peptide targeting the chloroplast. Residue cysteine 111 is part of the active site.

It belongs to the glutathione peroxidase family.

Its subcellular location is the plastid. It is found in the chloroplast stroma. It carries out the reaction a hydroperoxy polyunsaturated fatty acid + 2 glutathione = a hydroxy polyunsaturated fatty acid + glutathione disulfide + H2O. Functionally, protects cells and enzymes from oxidative damage, by catalyzing the reduction of hydrogen peroxide, lipid peroxides and organic hydroperoxide, by glutathione. The chain is Phospholipid hydroperoxide glutathione peroxidase, chloroplastic from Pisum sativum (Garden pea).